The chain runs to 184 residues: Copper transporter 6 (184 aa).

Over residues 1–25 the composition is skewed to low complexity; it reads MRGMGDDGMGPMAMAPPRSGHATAA. The interval 1–27 is disordered; that stretch reads MRGMGDDGMGPMAMAPPRSGHATAAAP. Transmembrane regions (helical) follow at residues 64–84 and 124–144; these read YALC…LSVL and MAYL…LAAV.

It belongs to the copper transporter (Ctr) (TC 1.A.56) family. SLC31A subfamily.

The protein localises to the membrane. In terms of biological role, involved in the transport of copper. The polypeptide is Copper transporter 6 (COPT6) (Oryza sativa subsp. japonica (Rice)).